Reading from the N-terminus, the 180-residue chain is Probable macrolide acetyltransferase (180 aa).

The protein belongs to the transferase hexapeptide repeat family.

The polypeptide is Probable macrolide acetyltransferase (Lysinibacillus sphaericus (Bacillus sphaericus)).